A 306-amino-acid polypeptide reads, in one-letter code: Anamorsin homolog (306 aa).

Residues 1 to 25 show a composition bias toward basic and acidic residues; the sequence is MVPPREDVTVRIVCERRRTAGKEAR. Residues 1–51 are disordered; the sequence is MVPPREDVTVRIVCERRRTAGKEARPPPSAKPTPGNTSSHPNAKETHRSNE. An N-terminal SAM-like domain region spans residues 59–190; the sequence is KQSHRRSIMA…RRNNTTNSVA (132 aa). The linker stretch occupies residues 191–218; the sequence is TLNFASNNNNGNDLLIDEDNLLTDASNL. 4 residues coordinate [2Fe-2S] cluster: Cys236, Cys242, Cys245, and Cys247. The interval 236–247 is fe-S binding site A; the sequence is CSGRAPCDDCTC. A compositionally biased stretch (basic and acidic residues) spans 252–265; the sequence is GAKEGNSEQPKEIK. The interval 252-272 is disordered; the sequence is GAKEGNSEQPKEIKSSSCGKC. 4 residues coordinate [4Fe-4S] cluster: Cys269, Cys272, Cys280, and Cys283. 2 short sequence motifs (cx2C motif) span residues 269-272 and 280-283; these read CGKC and CASC. The segment at 269-283 is fe-S binding site B; that stretch reads CGKCSLGDAFRCASC.

The protein belongs to the anamorsin family. In terms of assembly, monomer. The cofactor is [2Fe-2S] cluster. It depends on [4Fe-4S] cluster as a cofactor.

Its subcellular location is the cytoplasm. It localises to the mitochondrion intermembrane space. In terms of biological role, component of the cytosolic iron-sulfur (Fe-S) protein assembly (CIA) machinery. Required for the maturation of extramitochondrial Fe-S proteins. Part of an electron transfer chain functioning in an early step of cytosolic Fe-S biogenesis, facilitating the de novo assembly of a [4Fe-4S] cluster on the cytosolic Fe-S scaffold complex. Electrons are transferred from NADPH via a FAD- and FMN-containing diflavin oxidoreductase. Together with the diflavin oxidoreductase, also required for the assembly of the diferric tyrosyl radical cofactor of ribonucleotide reductase (RNR), probably by providing electrons for reduction during radical cofactor maturation in the catalytic small subunit. The polypeptide is Anamorsin homolog (Phaeodactylum tricornutum (strain CCAP 1055/1)).